Consider the following 87-residue polypeptide: Beta-toxin CsE3 (87 aa).

An N-terminal signal peptide occupies residues 1–19 (MNSLLIIAACLALIGTVWA). One can recognise an LCN-type CS-alpha/beta domain in the interval 20–85 (KEGYIVNYHT…VWPLPKKKCN (66 aa)). 4 disulfides stabilise this stretch: C31–C84, C35–C60, C44–C65, and C48–C67. The residue at position 85 (N85) is an Asparagine amide.

It belongs to the long (4 C-C) scorpion toxin superfamily. Sodium channel inhibitor family. Beta subfamily. In terms of tissue distribution, expressed by the venom gland.

It is found in the secreted. Its function is as follows. Beta toxins bind voltage-independently at site-4 of sodium channels (Nav) and shift the voltage of activation toward more negative potentials thereby affecting sodium channel activation and promoting spontaneous and repetitive firing. The chain is Beta-toxin CsE3 from Centruroides sculpturatus (Arizona bark scorpion).